Reading from the N-terminus, the 216-residue chain is Ribosome maturation factor RimP (216 aa).

Belongs to the RimP family.

The protein resides in the cytoplasm. Required for maturation of 30S ribosomal subunits. In Bartonella quintana (strain Toulouse) (Rochalimaea quintana), this protein is Ribosome maturation factor RimP.